The following is a 560-amino-acid chain: Phenylalanine--tRNA ligase beta subunit (560 aa).

In terms of domain architecture, B5 spans 279-354 (LTPKEFEVDL…IAYGYNNIEP (76 aa)). Asp332, Asp338, Glu341, and Asp342 together coordinate Mg(2+).

Belongs to the phenylalanyl-tRNA synthetase beta subunit family. Type 2 subfamily. In terms of assembly, tetramer of two alpha and two beta subunits. Mg(2+) serves as cofactor.

Its subcellular location is the cytoplasm. The catalysed reaction is tRNA(Phe) + L-phenylalanine + ATP = L-phenylalanyl-tRNA(Phe) + AMP + diphosphate + H(+). The chain is Phenylalanine--tRNA ligase beta subunit from Thermococcus sibiricus (strain DSM 12597 / MM 739).